A 587-amino-acid chain; its full sequence is MKRSMYAGRVREEHIGQEITLKGWVGRRRDLGGLIFIDLRDREGIMQLVINPEKVSAEVMATAESLRSEFVIEVTGQVAAREQANDKLPTGAVELNVTALIVLNTAKTTPFEIKDGIEANDDTRLRYRYLDLRRPEMLENLKLRAKVTHSIRNYLDELEFIDVETPFLSKSTPEGARDYLVPSRVNKGHFYALPQSPQITKQLLMNAGFDRYYQIVKCFRDEDLRGDRQPEFTQVDLETSFLTEQEIQDITEGLIARVMKETKGIEVTLPFPRVKYDDAMALYGSDKPDTRFDMLLQDLTEVVKGVDFKVFSEAPAVKAIVVKGAADNYSRKDIDKMTEVAKQYGAKGLAWVKVVDGELNGPVAKFLTGIQEELTTALALEDKDLVLFVADTLEVANATLGALRGRIAKELGLIDNDKFNFLWVVDWPMFEWSEEEGRYMSAHHPFTLPQEETAHELEGDLAKVRAIAYDIVLNGYELGGGSLRINQKDLQERMFKALGFSAEEANDQFGFLLEAMDYGFPPHGGLAIGLDRFVMLLAGEENIREVIAFPKNNKATDPMTQAPSTVALKQLEELSLQVEEDETSKTN.

Glutamate 174 serves as a coordination point for L-aspartate. The tract at residues 198 to 201 is aspartate; that stretch reads QITK. Arginine 220 is an L-aspartate binding site. ATP contacts are provided by residues 220–222 and glutamine 229; that span reads RDE. Histidine 443 provides a ligand contact to L-aspartate. Glutamate 477 lines the ATP pocket. Arginine 484 lines the L-aspartate pocket. 529-532 provides a ligand contact to ATP; sequence GLDR.

Belongs to the class-II aminoacyl-tRNA synthetase family. Type 1 subfamily. In terms of assembly, homodimer.

Its subcellular location is the cytoplasm. The catalysed reaction is tRNA(Asp) + L-aspartate + ATP = L-aspartyl-tRNA(Asp) + AMP + diphosphate. Catalyzes the attachment of L-aspartate to tRNA(Asp) in a two-step reaction: L-aspartate is first activated by ATP to form Asp-AMP and then transferred to the acceptor end of tRNA(Asp). The sequence is that of Aspartate--tRNA ligase from Streptococcus pneumoniae (strain Taiwan19F-14).